The primary structure comprises 457 residues: UDP-glycosyltransferase 74C1 (457 aa).

UDP-alpha-D-glucose contacts are provided by residues Thr281, 336–338 (VPQ), 353–361 (HCGWNSTLE), and 375–378 (WTDQ).

The protein belongs to the UDP-glycosyltransferase family.

This Arabidopsis thaliana (Mouse-ear cress) protein is UDP-glycosyltransferase 74C1 (UGT74C1).